Consider the following 261-residue polypeptide: Trifolitoxin immunity protein (261 aa).

Functionally, required for TFX resistance. This Rhizobium leguminosarum bv. trifolii protein is Trifolitoxin immunity protein (tfxG).